The sequence spans 643 residues: Transmembrane 9 superfamily member 4 (643 aa).

The first 23 residues, 1-23 (MAAAMIWWPRFLLLLCLTCKGST), serve as a signal peptide directing secretion. Over 24 to 282 (FYVPGVAPIN…TMSDVQIHWF (259 aa)) the chain is Extracellular. The helical transmembrane segment at 283-303 (SIINSVVVVFFLSGILSMIII) threads the bilayer. At 304-347 (RTLRKDIANYNKEDDIEDTMEESGWKLVHGDVFRPPQYPMILSS) the chain is on the cytoplasmic side. The residue at position 313 (Tyr-313) is a Phosphotyrosine. A helical membrane pass occupies residues 348–368 (LLGSGIQLFCMILIVIFVAML). At 369-377 (GMLSPSSRG) the chain is on the extracellular side. A helical membrane pass occupies residues 378–398 (ALMTTACFLFMFMGVFGGFSA). Over 399 to 417 (GRLYRTLKGHRWKKGAFCT) the chain is Cytoplasmic. The helical transmembrane segment at 418–438 (ATLYPGVVFGICFVLNCFIWG) threads the bilayer. Residues 439–450 (KHSSGAVPFPTM) are Extracellular-facing. The helical transmembrane segment at 451–471 (VALLCMWFGISLPLVYLGYYF) threads the bilayer. Over 472 to 502 (GFRKQPYDNPVRTNQIPRQIPEQRWYMNRFV) the chain is Cytoplasmic. A helical membrane pass occupies residues 503 to 523 (GILMAGILPFGAMFIELFFIF). Topologically, residues 524–536 (SAIWENQFYYLFG) are extracellular. The chain crosses the membrane as a helical span at residues 537-557 (FLFLVFIILVVSCSQISIVMV). The Cytoplasmic segment spans residues 558 to 571 (YFQLCAEDYRWWWR). A helical membrane pass occupies residues 572 to 592 (NFLVSGGSAFYVLVYAIFYFV). The Extracellular portion of the chain corresponds to 593–599 (NKLDIVE). The helical transmembrane segment at 600-620 (FIPSLLYFGYTTLMVLSFWLL) threads the bilayer. Residues 621 to 643 (TGTIGFYAAYMFVRKIYAAVKID) lie on the Cytoplasmic side of the membrane.

This sequence belongs to the nonaspanin (TM9SF) (TC 9.A.2) family.

It is found in the membrane. It localises to the golgi apparatus. The protein resides in the early endosome. Its function is as follows. Associates with proteins harboring glycine-rich transmembrane domains and ensures their efficient localization to the cell surface. This is Transmembrane 9 superfamily member 4 (Tm9sf4) from Mus musculus (Mouse).